The sequence spans 195 residues: Shikimate kinase (195 aa).

31–36 (GAGKSC) provides a ligand contact to ATP. Ser35 serves as a coordination point for Mg(2+). Positions 53, 77, and 99 each coordinate substrate. Arg137 lines the ATP pocket. Arg156 serves as a coordination point for substrate.

This sequence belongs to the shikimate kinase family. As to quaternary structure, monomer. Requires Mg(2+) as cofactor.

The protein resides in the cytoplasm. The catalysed reaction is shikimate + ATP = 3-phosphoshikimate + ADP + H(+). The protein operates within metabolic intermediate biosynthesis; chorismate biosynthesis; chorismate from D-erythrose 4-phosphate and phosphoenolpyruvate: step 5/7. Functionally, catalyzes the specific phosphorylation of the 3-hydroxyl group of shikimic acid using ATP as a cosubstrate. The polypeptide is Shikimate kinase (Paramagnetospirillum magneticum (strain ATCC 700264 / AMB-1) (Magnetospirillum magneticum)).